The primary structure comprises 229 residues: UPF0758 protein MM_2791 (229 aa).

Positions 106–228 (KISSPKDVYT…YVSLKDEGFV (123 aa)) constitute an MPN domain. Positions 177, 179, and 190 each coordinate Zn(2+). The short motif at 177-190 (HNHPSGDPSPSRED) is the JAMM motif element.

It belongs to the UPF0758 family.

In Methanosarcina mazei (strain ATCC BAA-159 / DSM 3647 / Goe1 / Go1 / JCM 11833 / OCM 88) (Methanosarcina frisia), this protein is UPF0758 protein MM_2791.